The following is a 357-amino-acid chain: 3-isopropylmalate dehydrogenase (357 aa).

G76–E89 contributes to the NAD(+) binding site. R96, R106, R134, and D224 together coordinate substrate. Residues D224, D248, and D252 each coordinate Mg(2+). An NAD(+)-binding site is contributed by G282–N294.

It belongs to the isocitrate and isopropylmalate dehydrogenases family. LeuB type 1 subfamily. In terms of assembly, homodimer. The cofactor is Mg(2+). Requires Mn(2+) as cofactor.

It is found in the cytoplasm. It carries out the reaction (2R,3S)-3-isopropylmalate + NAD(+) = 4-methyl-2-oxopentanoate + CO2 + NADH. It functions in the pathway amino-acid biosynthesis; L-leucine biosynthesis; L-leucine from 3-methyl-2-oxobutanoate: step 3/4. Catalyzes the oxidation of 3-carboxy-2-hydroxy-4-methylpentanoate (3-isopropylmalate) to 3-carboxy-4-methyl-2-oxopentanoate. The product decarboxylates to 4-methyl-2 oxopentanoate. The protein is 3-isopropylmalate dehydrogenase of Xylella fastidiosa (strain 9a5c).